Here is a 513-residue protein sequence, read N- to C-terminus: ATP synthase subunit alpha (513 aa).

169 to 176 (GDRQTGKT) contacts ATP.

Belongs to the ATPase alpha/beta chains family. In terms of assembly, F-type ATPases have 2 components, CF(1) - the catalytic core - and CF(0) - the membrane proton channel. CF(1) has five subunits: alpha(3), beta(3), gamma(1), delta(1), epsilon(1). CF(0) has three main subunits: a(1), b(2) and c(9-12). The alpha and beta chains form an alternating ring which encloses part of the gamma chain. CF(1) is attached to CF(0) by a central stalk formed by the gamma and epsilon chains, while a peripheral stalk is formed by the delta and b chains.

The protein localises to the cell inner membrane. The enzyme catalyses ATP + H2O + 4 H(+)(in) = ADP + phosphate + 5 H(+)(out). Its function is as follows. Produces ATP from ADP in the presence of a proton gradient across the membrane. The alpha chain is a regulatory subunit. The protein is ATP synthase subunit alpha of Pectobacterium carotovorum subsp. carotovorum (strain PC1).